Reading from the N-terminus, the 345-residue chain is UDP-N-acetylenolpyruvoylglucosamine reductase (345 aa).

The FAD-binding PCMH-type domain maps to 16-185 (VNAFAKSVVT…VSVGLRLCKK (170 aa)). Arg-162 is an active-site residue. The active-site Proton donor is Ser-231. Glu-328 is an active-site residue.

The protein belongs to the MurB family. The cofactor is FAD.

Its subcellular location is the cytoplasm. The catalysed reaction is UDP-N-acetyl-alpha-D-muramate + NADP(+) = UDP-N-acetyl-3-O-(1-carboxyvinyl)-alpha-D-glucosamine + NADPH + H(+). It participates in cell wall biogenesis; peptidoglycan biosynthesis. In terms of biological role, cell wall formation. The chain is UDP-N-acetylenolpyruvoylglucosamine reductase from Blochmanniella pennsylvanica (strain BPEN).